Reading from the N-terminus, the 92-residue chain is Small ribosomal subunit protein uS19c (92 aa).

The protein belongs to the universal ribosomal protein uS19 family.

It localises to the plastid. The protein localises to the chloroplast. Functionally, protein S19 forms a complex with S13 that binds strongly to the 16S ribosomal RNA. The protein is Small ribosomal subunit protein uS19c of Oltmannsiellopsis viridis (Marine flagellate).